A 462-amino-acid chain; its full sequence is 3-isopropylmalate dehydratase large subunit (462 aa).

[4Fe-4S] cluster contacts are provided by cysteine 337, cysteine 397, and cysteine 400.

Belongs to the aconitase/IPM isomerase family. LeuC type 1 subfamily. As to quaternary structure, heterodimer of LeuC and LeuD. It depends on [4Fe-4S] cluster as a cofactor.

The enzyme catalyses (2R,3S)-3-isopropylmalate = (2S)-2-isopropylmalate. It functions in the pathway amino-acid biosynthesis; L-leucine biosynthesis; L-leucine from 3-methyl-2-oxobutanoate: step 2/4. Catalyzes the isomerization between 2-isopropylmalate and 3-isopropylmalate, via the formation of 2-isopropylmaleate. This Listeria monocytogenes serotype 4a (strain HCC23) protein is 3-isopropylmalate dehydratase large subunit.